A 233-amino-acid polypeptide reads, in one-letter code: Orotidine 5'-phosphate decarboxylase (233 aa).

Substrate-binding positions include D11, K34, D61–T70, T117, R179, Q188, G208, and R209. K63 serves as the catalytic Proton donor.

The protein belongs to the OMP decarboxylase family. Type 1 subfamily. Homodimer.

It carries out the reaction orotidine 5'-phosphate + H(+) = UMP + CO2. It functions in the pathway pyrimidine metabolism; UMP biosynthesis via de novo pathway; UMP from orotate: step 2/2. Its function is as follows. Catalyzes the decarboxylation of orotidine 5'-monophosphate (OMP) to uridine 5'-monophosphate (UMP). This Streptococcus pneumoniae (strain CGSP14) protein is Orotidine 5'-phosphate decarboxylase.